The primary structure comprises 1071 residues: Methionine S-methyltransferase (1071 aa).

Residue alanine 2 is modified to N-acetylalanine.

This sequence belongs to the class I-like SAM-binding methyltransferase superfamily. Homotetramer. In terms of tissue distribution, expressed in roots, rosette leaves and cauline leaves. Expressed at a lower level in developing seeds.

It is found in the cytoplasm. The enzyme catalyses L-methionine + S-adenosyl-L-methionine = S-methyl-L-methionine + S-adenosyl-L-homocysteine. Functionally, catalyzes the S-methylmethionine (SMM) biosynthesis from adenosyl-L-homocysteine (AdoMet) and methionine. SMM biosynthesis (by MMT1) and degradation (by HMT-1, HMT-2 and HMT-3) constitute the SMM cycle in plants, which is probably required to achieve short term control of AdoMet level. Also able to catalyze the selenium-methylmethionine (SeMM) from AdoMet and selenium-methionine (SeMet). May play a role in phoem sulfur transport; such function is however not essential. The protein is Methionine S-methyltransferase (MMT1) of Arabidopsis thaliana (Mouse-ear cress).